A 507-amino-acid polypeptide reads, in one-letter code: Histidine ammonia-lyase (507 aa).

Residues 141–143 constitute a cross-link (5-imidazolinone (Ala-Gly)); sequence ASG. S142 is modified (2,3-didehydroalanine (Ser)).

Belongs to the PAL/histidase family. Post-translationally, contains an active site 4-methylidene-imidazol-5-one (MIO), which is formed autocatalytically by cyclization and dehydration of residues Ala-Ser-Gly.

The protein localises to the cytoplasm. The catalysed reaction is L-histidine = trans-urocanate + NH4(+). It participates in amino-acid degradation; L-histidine degradation into L-glutamate; N-formimidoyl-L-glutamate from L-histidine: step 1/3. In Burkholderia lata (strain ATCC 17760 / DSM 23089 / LMG 22485 / NCIMB 9086 / R18194 / 383), this protein is Histidine ammonia-lyase.